A 136-amino-acid polypeptide reads, in one-letter code: Large ribosomal subunit protein bL21 (136 aa).

The span at 1 to 21 (MSETPSKAKASKPAESKAQAS) shows a compositional bias: low complexity. Residues 1-25 (MSETPSKAKASKPAESKAQASDSSG) form a disordered region.

This sequence belongs to the bacterial ribosomal protein bL21 family. Part of the 50S ribosomal subunit. Contacts protein L20.

This protein binds to 23S rRNA in the presence of protein L20. The protein is Large ribosomal subunit protein bL21 of Synechococcus sp. (strain RCC307).